Reading from the N-terminus, the 142-residue chain is UPF0179 protein PYRAB06360 (142 aa).

This sequence belongs to the UPF0179 family.

This is UPF0179 protein PYRAB06360 from Pyrococcus abyssi (strain GE5 / Orsay).